Reading from the N-terminus, the 242-residue chain is Small ribosomal subunit protein eS6 (242 aa).

Basic and acidic residues predominate over residues 219-229 (EKKSEKAEEKK). Residues 219-242 (EKKSEKAEEKKRRASSLRTQSVQA) form a disordered region. A phosphoserine mark is found at Ser233 and Ser234.

It belongs to the eukaryotic ribosomal protein eS6 family. Post-translationally, phosphorylated.

The chain is Small ribosomal subunit protein eS6 (RPS6) from Yarrowia lipolytica (strain CLIB 122 / E 150) (Yeast).